A 333-amino-acid chain; its full sequence is Glycerol-3-phosphate dehydrogenase [NAD(P)+] (333 aa).

Residues Ser-10, Trp-11, and Lys-105 each coordinate NADPH. Sn-glycerol 3-phosphate is bound by residues Lys-105, Gly-136, and Thr-138. Ala-140 is an NADPH binding site. Sn-glycerol 3-phosphate is bound by residues Lys-191, Asp-244, Ser-254, Arg-255, and Asn-256. Residue Lys-191 is the Proton acceptor of the active site. Position 255 (Arg-255) interacts with NADPH. Val-279 and Glu-281 together coordinate NADPH.

Belongs to the NAD-dependent glycerol-3-phosphate dehydrogenase family.

The protein resides in the cytoplasm. It carries out the reaction sn-glycerol 3-phosphate + NAD(+) = dihydroxyacetone phosphate + NADH + H(+). The catalysed reaction is sn-glycerol 3-phosphate + NADP(+) = dihydroxyacetone phosphate + NADPH + H(+). It participates in membrane lipid metabolism; glycerophospholipid metabolism. In terms of biological role, catalyzes the reduction of the glycolytic intermediate dihydroxyacetone phosphate (DHAP) to sn-glycerol 3-phosphate (G3P), the key precursor for phospholipid synthesis. This chain is Glycerol-3-phosphate dehydrogenase [NAD(P)+], found in Trichlorobacter lovleyi (strain ATCC BAA-1151 / DSM 17278 / SZ) (Geobacter lovleyi).